Consider the following 60-residue polypeptide: MARYRHSRSRSRSRYQRRRRRRSRYRSQRRRYRRRRGSRRRRRRGRRRGYRRRYSRRRRY.

Residues 1-60 are disordered; the sequence is MARYRHSRSRSRSRYQRRRRRRSRYRSQRRRYRRRRGSRRRRRRGRRRGYRRRYSRRRRY.

The protein belongs to the protamine P1 family. As to expression, testis.

The protein localises to the nucleus. Its subcellular location is the chromosome. Protamines substitute for histones in the chromatin of sperm during the haploid phase of spermatogenesis. They compact sperm DNA into a highly condensed, stable and inactive complex. This is Sperm protamine P1 (PRM1) from Phascolarctos cinereus (Koala).